Here is an 82-residue protein sequence, read N- to C-terminus: Small ribosomal subunit protein bS16 (82 aa).

This sequence belongs to the bacterial ribosomal protein bS16 family.

This Francisella philomiragia subsp. philomiragia (strain ATCC 25017 / CCUG 19701 / FSC 153 / O#319-036) protein is Small ribosomal subunit protein bS16.